Here is a 343-residue protein sequence, read N- to C-terminus: Cilia- and flagella-associated protein 36 (343 aa).

Phosphoserine occurs at positions 85 and 147. Residues 147 to 187 (SDLEQEEMKILREVLRKSKEEYDQEEERKRKKQSSEAKMEE) are a coiled coil. The segment at 165-188 (KEEYDQEEERKRKKQSSEAKMEEL) is disordered. S201 is modified (phosphoserine). Composition is skewed to basic and acidic residues over residues 279 to 293 (QKRDKLLSMRKDTRT) and 301 to 323 (QKGKPTREAEEMTEKPEMTAEEK). The disordered stretch occupies residues 279 to 323 (QKRDKLLSMRKDTRTKQIQNTEQKGKPTREAEEMTEKPEMTAEEK).

This sequence belongs to the CFAP36 family. In terms of assembly, interacts with ARL3.

Its subcellular location is the nucleus. The protein localises to the cytoplasm. It localises to the cell projection. It is found in the cilium. The protein resides in the flagellum. May act as an effector for ARL3. This Mus musculus (Mouse) protein is Cilia- and flagella-associated protein 36.